The chain runs to 217 residues: Adenylate kinase (217 aa).

10 to 15 lines the ATP pocket; the sequence is GAGKGT. The interval 30-59 is NMP; sequence STGDIFRKNVADDTPLGRLAKQYMDAGDLV. Residues T31, R36, 57 to 59, 85 to 88, and Q92 contribute to the AMP site; these read DLV and GFPR. The segment at 126–163 is LID; sequence GRRTCADCAHVWHVTYDPPTVDGVCDLCGGKLFQREDD. R127 provides a ligand contact to ATP. Positions 130, 133, 150, and 153 each coordinate Zn(2+). Residues R160 and R171 each contribute to the AMP site. G199 contributes to the ATP binding site.

This sequence belongs to the adenylate kinase family. Monomer.

The protein localises to the cytoplasm. The catalysed reaction is AMP + ATP = 2 ADP. The protein operates within purine metabolism; AMP biosynthesis via salvage pathway; AMP from ADP: step 1/1. Catalyzes the reversible transfer of the terminal phosphate group between ATP and AMP. Plays an important role in cellular energy homeostasis and in adenine nucleotide metabolism. This chain is Adenylate kinase, found in Acidothermus cellulolyticus (strain ATCC 43068 / DSM 8971 / 11B).